The following is a 232-amino-acid chain: Ribonuclease 3 (232 aa).

The RNase III domain maps to 6–133 (FNDIENRLGV…VIAAVYLDKG (128 aa)). E46 contributes to the Mg(2+) binding site. The active site involves D50. D119 and E122 together coordinate Mg(2+). E122 is an active-site residue. The DRBM domain occupies 160–229 (DFKTKLQELL…AKEALKRLEK (70 aa)).

Belongs to the ribonuclease III family. As to quaternary structure, homodimer. It depends on Mg(2+) as a cofactor.

Its subcellular location is the cytoplasm. It carries out the reaction Endonucleolytic cleavage to 5'-phosphomonoester.. Its function is as follows. Digests double-stranded RNA. Involved in the processing of primary rRNA transcript to yield the immediate precursors to the large and small rRNAs (23S and 16S). Processes some mRNAs, and tRNAs when they are encoded in the rRNA operon. Processes pre-crRNA and tracrRNA of type II CRISPR loci if present in the organism. In Clostridium botulinum (strain Eklund 17B / Type B), this protein is Ribonuclease 3.